The sequence spans 269 residues: Ribosomal RNA large subunit methyltransferase E (269 aa).

5 residues coordinate S-adenosyl-L-methionine: glycine 58, tryptophan 60, aspartate 78, aspartate 96, and aspartate 120. Lysine 160 acts as the Proton acceptor in catalysis. The interval 234–269 is disordered; that stretch reads HEKKEGNETSDNDEDNNKNGLMIKKIKELRGKRSKL. Over residues 258–269 the composition is skewed to basic and acidic residues; the sequence is KIKELRGKRSKL.

Belongs to the class I-like SAM-binding methyltransferase superfamily. RNA methyltransferase RlmE family.

The protein resides in the cytoplasm. The catalysed reaction is uridine(2552) in 23S rRNA + S-adenosyl-L-methionine = 2'-O-methyluridine(2552) in 23S rRNA + S-adenosyl-L-homocysteine + H(+). Specifically methylates the uridine in position 2552 of 23S rRNA at the 2'-O position of the ribose in the fully assembled 50S ribosomal subunit. The sequence is that of Ribosomal RNA large subunit methyltransferase E from Methanococcus aeolicus (strain ATCC BAA-1280 / DSM 17508 / OCM 812 / Nankai-3).